We begin with the raw amino-acid sequence, 393 residues long: S-adenosylmethionine synthase 1 (393 aa).

Residue Glu-9 coordinates Mg(2+). His-15 lines the ATP pocket. A K(+)-binding site is contributed by Glu-43. 2 residues coordinate L-methionine: Glu-56 and Gln-99. ATP contacts are provided by residues Asp-167–Lys-169, Ser-235–Phe-238, Asp-246, Arg-252–Lys-253, Ala-269, Lys-273, and Lys-277. An L-methionine-binding site is contributed by Asp-246. L-methionine is bound at residue Lys-277.

Belongs to the AdoMet synthase family. Homotetramer. Requires Mn(2+) as cofactor. It depends on Mg(2+) as a cofactor. The cofactor is Co(2+). K(+) serves as cofactor.

It is found in the cytoplasm. The enzyme catalyses L-methionine + ATP + H2O = S-adenosyl-L-methionine + phosphate + diphosphate. The protein operates within amino-acid biosynthesis; S-adenosyl-L-methionine biosynthesis; S-adenosyl-L-methionine from L-methionine: step 1/1. Catalyzes the formation of S-adenosylmethionine from methionine and ATP. The reaction comprises two steps that are both catalyzed by the same enzyme: formation of S-adenosylmethionine (AdoMet) and triphosphate, and subsequent hydrolysis of the triphosphate. In Solanum tuberosum (Potato), this protein is S-adenosylmethionine synthase 1 (METK1).